The following is a 291-amino-acid chain: tRNA-cytidine(32) 2-sulfurtransferase (291 aa).

Positions 36-41 (SGGKDS) match the PP-loop motif motif. Cysteine 111, cysteine 114, and cysteine 202 together coordinate [4Fe-4S] cluster. A disordered region spans residues 258-291 (RDPWLDAEDEEAEDCGEPPAGDGVVSLGGARGGR). Acidic residues predominate over residues 262–273 (LDAEDEEAEDCG).

This sequence belongs to the TtcA family. Homodimer. It depends on Mg(2+) as a cofactor. [4Fe-4S] cluster serves as cofactor.

It is found in the cytoplasm. It catalyses the reaction cytidine(32) in tRNA + S-sulfanyl-L-cysteinyl-[cysteine desulfurase] + AH2 + ATP = 2-thiocytidine(32) in tRNA + L-cysteinyl-[cysteine desulfurase] + A + AMP + diphosphate + H(+). It functions in the pathway tRNA modification. In terms of biological role, catalyzes the ATP-dependent 2-thiolation of cytidine in position 32 of tRNA, to form 2-thiocytidine (s(2)C32). The sulfur atoms are provided by the cysteine/cysteine desulfurase (IscS) system. The protein is tRNA-cytidine(32) 2-sulfurtransferase of Anaeromyxobacter dehalogenans (strain 2CP-1 / ATCC BAA-258).